We begin with the raw amino-acid sequence, 126 residues long: uncharacterized protein (126 aa).

This is an uncharacterized protein from Bacillus subtilis (strain 168).